The primary structure comprises 150 residues: MEKRERKKIRVLAGGVFDLLHVGHIHFLSQAKSLGDELVVIVAHDETVRMQKRREPVNPAEDRAELLRALKMVDEVYIGSPGTIDYELVRKINPDIVAIGPDQRFSCERLKEELRKHGINSEVIRIPYLYKEDRAKTSKIIQRIVETYCE.

ATP-binding positions include Val16–Phe17, His21–His24, and Asp102.

Belongs to the archaeal FAD synthase family. In terms of assembly, homodimer. A divalent metal cation is required as a cofactor.

It carries out the reaction FMN + ATP + H(+) = FAD + diphosphate. Its pathway is cofactor biosynthesis; FAD biosynthesis; FAD from FMN: step 1/1. Its function is as follows. Catalyzes the transfer of the AMP portion of ATP to flavin mononucleotide (FMN) to produce flavin adenine dinucleotide (FAD) coenzyme. The polypeptide is FAD synthase (Thermococcus onnurineus (strain NA1)).